Consider the following 371-residue polypeptide: N-acetyldiaminopimelate deacetylase (371 aa).

Aspartate 68 is a catalytic residue. The Proton acceptor role is filled by glutamate 127.

Belongs to the peptidase M20A family. N-acetyldiaminopimelate deacetylase subfamily.

It carries out the reaction N-acetyl-(2S,6S)-2,6-diaminopimelate + H2O = (2S,6S)-2,6-diaminopimelate + acetate. The protein operates within amino-acid biosynthesis; L-lysine biosynthesis via DAP pathway; LL-2,6-diaminopimelate from (S)-tetrahydrodipicolinate (acetylase route): step 3/3. Its function is as follows. Catalyzes the conversion of N-acetyl-diaminopimelate to diaminopimelate and acetate. This Listeria monocytogenes serovar 1/2a (strain ATCC BAA-679 / EGD-e) protein is N-acetyldiaminopimelate deacetylase.